We begin with the raw amino-acid sequence, 429 residues long: MTYSPVVESVEAQAFAVTDLSPAAEFKTADFDTYVMNTYGRFPIAIARGQGSTLWDTEGKSYLDFVAGIATCTLGHAHPALVRAVSDQIQKLHHVSNLYYIPEQGELAKWIVEHSCADRVFFCNSGAEANEAAIKLVRKYAHTVLDFLEQPVILTAKASFHGRTLATITATGQPKYQQYFDPLVPGFDYVPYNDIRSLENKVADLDEGNSRVAAIFLEPLQGEGGVRPGDLAYFKRVREICDQNDILLVFDEVQVGVGRTGKLWGYEHLGVEPDIFTSAKGLAGGVPIGAMMCKKFCDVFEPGNHASTFGGNPLACAAGLAVLKTIEGDRLLDNVQARGEQLRSGLAEIKNQYPTLFTEVRGWGLINGLEISAESSLTSVEIVKAAMEQGLLLAPAGPKVLRFVPPLVVTEAEIAQAVEILRQAIATLV.

Pyridoxal 5'-phosphate is bound by residues 126–127 and phenylalanine 160; that span reads GA. Arginine 163 lines the N(2)-acetyl-L-ornithine pocket. 251–254 contacts pyridoxal 5'-phosphate; that stretch reads DEVQ. Lysine 280 is subject to N6-(pyridoxal phosphate)lysine. Serine 307 serves as a coordination point for N(2)-acetyl-L-ornithine. Threonine 308 is a binding site for pyridoxal 5'-phosphate.

This sequence belongs to the class-III pyridoxal-phosphate-dependent aminotransferase family. ArgD subfamily. As to quaternary structure, homodimer. Requires pyridoxal 5'-phosphate as cofactor.

The protein resides in the cytoplasm. The catalysed reaction is N(2)-acetyl-L-ornithine + 2-oxoglutarate = N-acetyl-L-glutamate 5-semialdehyde + L-glutamate. It participates in amino-acid biosynthesis; L-arginine biosynthesis; N(2)-acetyl-L-ornithine from L-glutamate: step 4/4. With respect to regulation, N-acetylornithine aminotransferase activity is stimulated by the addition of Mg(2+), Ca(2+) or Mn(2+), and inhibited by the addition of Zn(2+), Cu(2+), Co(2+) or Ni(2+). In terms of biological role, catalyzes the reversible conversion of N-acetylornithine to N-acetylglutamate-5-semialdehyde. In vitro, also shows very low ornithine aminotransferase (OAT) and gamma-aminobutyrate aminotransferase (GABA-AT) activity, catalyzing the conversion of ornithine (Orn) to glutamate-5-semialdehyde and of gamma-aminobutyric acid (GABA) to succinate semialdehyde. It has been shown to function as a GABA-AT and contributes to closing the tricarboxylic acid cycle of Synechocystis sp. PCC6803 via the GABA shunt. However, the catalytic efficiency toward N-acetylornithine is 2500-fold and 10700-fold higher than that toward ornithine and gamma-aminobutyrate, respectively, indicating that the protein mainly functions as an N-acetylornithine aminotransferase. The polypeptide is Acetylornithine aminotransferase (Synechocystis sp. (strain ATCC 27184 / PCC 6803 / Kazusa)).